A 338-amino-acid polypeptide reads, in one-letter code: Uroporphyrinogen decarboxylase (338 aa).

Residues 23 to 27 (RQAGR), aspartate 72, tyrosine 146, threonine 201, and histidine 312 contribute to the substrate site.

Belongs to the uroporphyrinogen decarboxylase family. Homodimer.

The protein resides in the cytoplasm. It catalyses the reaction uroporphyrinogen III + 4 H(+) = coproporphyrinogen III + 4 CO2. The protein operates within porphyrin-containing compound metabolism; protoporphyrin-IX biosynthesis; coproporphyrinogen-III from 5-aminolevulinate: step 4/4. Its function is as follows. Catalyzes the decarboxylation of four acetate groups of uroporphyrinogen-III to yield coproporphyrinogen-III. The polypeptide is Uroporphyrinogen decarboxylase (Thermodesulfovibrio yellowstonii (strain ATCC 51303 / DSM 11347 / YP87)).